The sequence spans 341 residues: Pectate trisaccharide-lyase (341 aa).

The first 27 residues, 1-27, serve as a signal peptide directing secretion; it reads MKKLISIIFIFVLGVVGSLTAAVSAEA. The propeptide occupies 28–39; sequence ASALNSGKVNPL. PbH1 repeat units follow at residues 131–156 and 158–186; these read ANNIIIRNLKIHEVASGDKDAIGIEG and SKNIWVDHNELYHSLNVDKDYYDGLFDVK. The Ca(2+) site is built by D150, D180, and D184. R233 is a catalytic residue. 2 PbH1 repeats span residues 262–283 and 287–322; these read GARIRIENNLFENAKDPIVSWY and PGYWHVSNNKFVNSRGSMPTTSTTTYNPPYSYSLDN.

The protein belongs to the polysaccharide lyase 1 family. Ca(2+) serves as cofactor.

It is found in the secreted. It carries out the reaction eliminative cleavage of unsaturated trigalacturonate as the major product from the reducing end of polygalacturonic acid/pectate.. In terms of biological role, cleaves unsaturated oligo-galacturonides from pectin. The major product is trigalacturonate; digalacturonate and tetragalacturonate are also produced. Activity on methylated pectins decreases with an increasing degree of methylation. This Bacillus licheniformis (strain ATCC 14580 / DSM 13 / JCM 2505 / CCUG 7422 / NBRC 12200 / NCIMB 9375 / NCTC 10341 / NRRL NRS-1264 / Gibson 46) protein is Pectate trisaccharide-lyase.